Reading from the N-terminus, the 107-residue chain is uncharacterized protein (107 aa).

Residues 6–107 enclose the Glutaredoxin domain; that stretch reads KKVIEQILDN…QAQVETLLAA (102 aa). Lysine 23 contributes to the glutathione binding site. Cysteine 31 is a binding site for [2Fe-2S] cluster. Residues arginine 60 and 85–86 contribute to the glutathione site; that span reads AD.

This sequence belongs to the glutaredoxin family. Monothiol subfamily.

Its subcellular location is the plastid. It is found in the chloroplast. This is an uncharacterized protein from Porphyra purpurea (Red seaweed).